Consider the following 415-residue polypeptide: Tyrosine--tRNA ligase (415 aa).

Y40 is a binding site for L-tyrosine. Positions A45 to S54 match the 'HIGH' region motif. L-tyrosine contacts are provided by Y178 and Q182. A 'KMSKS' region motif is present at residues K238–S242. ATP is bound at residue K241. An S4 RNA-binding domain is found at A350–L414.

The protein belongs to the class-I aminoacyl-tRNA synthetase family. TyrS type 1 subfamily. In terms of assembly, homodimer.

Its subcellular location is the cytoplasm. It catalyses the reaction tRNA(Tyr) + L-tyrosine + ATP = L-tyrosyl-tRNA(Tyr) + AMP + diphosphate + H(+). Its function is as follows. Catalyzes the attachment of tyrosine to tRNA(Tyr) in a two-step reaction: tyrosine is first activated by ATP to form Tyr-AMP and then transferred to the acceptor end of tRNA(Tyr). This Ruegeria pomeroyi (strain ATCC 700808 / DSM 15171 / DSS-3) (Silicibacter pomeroyi) protein is Tyrosine--tRNA ligase.